Here is a 1980-residue protein sequence, read N- to C-terminus: Sodium channel protein type 8 subunit alpha (1980 aa).

2 disordered regions span residues Met-1–Glu-20 and Arg-28–Gly-62. Topologically, residues Met-1–Ser-132 are cytoplasmic. A compositionally biased stretch (basic and acidic residues) spans Arg-28–Ala-61. Residues Ile-114–Gln-442 form an I repeat. Residues Val-133–Phe-151 form a helical membrane-spanning segment. Topologically, residues Ser-152 to Ser-158 are extracellular. A helical membrane pass occupies residues Lys-159–Ala-179. Residues Arg-180 to Pro-193 lie on the Cytoplasmic side of the membrane. Residues Trp-194–Val-211 form a helical membrane-spanning segment. Residues Asn-212–Ser-217 are Extracellular-facing. A glycan (N-linked (GlcNAc...) asparagine) is linked at Asn-215. The chain crosses the membrane as a helical span at residues Ala-218–Ile-234. The Cytoplasmic portion of the chain corresponds to Pro-235–Asp-253. The chain crosses the membrane as a helical span at residues Val-254–Phe-273. The Extracellular portion of the chain corresponds to Met-274–Thr-355. Residues Cys-281 and Cys-333 are joined by a disulfide bond. N-linked (GlcNAc...) asparagine glycans are attached at residues Asn-289, Asn-295, and Asn-308. Asn-326 carries N-linked (GlcNAc...) (high mannose) asparagine glycosylation. The pore-forming intramembrane region spans Phe-356–Leu-380. Residue Glu-373 coordinates Na(+). Topologically, residues Arg-381 to Tyr-387 are extracellular. Residues Met-388–Ala-408 form a helical membrane-spanning segment. Residues Val-409–Pro-753 lie on the Cytoplasmic side of the membrane. 2 disordered regions span residues Ala-446–Arg-530 and Phe-568–Phe-602. The span at Pro-474–Lys-486 shows a compositional bias: low complexity. Residues Lys-489–Gln-500 are compositionally biased toward basic residues. 2 stretches are compositionally biased toward basic and acidic residues: residues Lys-501–Arg-530 and Asp-586–Phe-602. Ser-518 and Ser-520 each carry phosphoserine. The stretch at Cys-735 to Gly-1007 is one II repeat. The chain crosses the membrane as a helical span at residues Phe-754 to Met-772. Topologically, residues Glu-773–His-783 are extracellular. Residues Val-784–Lys-803 traverse the membrane as a helical segment. Residues Leu-804–Trp-817 are Cytoplasmic-facing. Residues Asn-818–Val-837 traverse the membrane as a helical segment. Topologically, residues Glu-838 to Gly-839 are extracellular. The helical transmembrane segment at Leu-840–Ser-857 threads the bilayer. At Trp-858–Gly-873 the chain is on the cytoplasmic side. Residues Ala-874–Val-892 traverse the membrane as a helical segment. The Extracellular segment spans residues Gly-893–Asp-921. Cys-906 and Cys-912 are joined by a disulfide. Positions Phe-922 to Trp-942 form an intramembrane region, pore-forming. Residues Glu-936 and Glu-939 each coordinate Na(+). At Asp-943 to Ile-955 the chain is on the extracellular side. Cys-944 and Cys-953 are oxidised to a cystine. The chain crosses the membrane as a helical span at residues Val-956–Leu-976. Over Leu-977–Trp-1199 the chain is Cytoplasmic. The tract at residues Asn-1107–Val-1148 is disordered. Residues Leu-1180–Leu-1495 form an III repeat. Residues Phe-1200 to Phe-1217 form a helical membrane-spanning segment. The Extracellular segment spans residues Glu-1218 to Thr-1230. A helical membrane pass occupies residues Ile-1231 to Leu-1249. Residues Lys-1250–Ala-1263 lie on the Cytoplasmic side of the membrane. Residues Trp-1264–Asn-1282 traverse the membrane as a helical segment. Residues Ala-1283–Gly-1290 are Extracellular-facing. A helical membrane pass occupies residues Ala-1291–Arg-1309. Over Phe-1310–Ser-1326 the chain is Cytoplasmic. A helical membrane pass occupies residues Ile-1327–Val-1346. The Extracellular segment spans residues Asn-1347 to Val-1399. Cys-1356 and Cys-1376 are disulfide-bonded. Asn-1358, Asn-1372, and Asn-1383 each carry an N-linked (GlcNAc...) asparagine glycan. The segment at residues Gly-1400 to Ala-1421 is an intramembrane region (pore-forming). Residues Ala-1422 to Ile-1438 lie on the Extracellular side of the membrane. Residues Tyr-1439 to Ile-1460 form a helical membrane-spanning segment. The Cytoplasmic portion of the chain corresponds to Gly-1461–Ala-1523. Ser-1497 carries the post-translational modification Phosphoserine; by PKC. Residues Ile-1504–Gln-1801 form an IV repeat. Residues Phe-1524–Val-1541 traverse the membrane as a helical segment. Residues Glu-1542–Asn-1552 are Extracellular-facing. Residues Ile-1553 to Leu-1571 traverse the membrane as a helical segment. Residues Lys-1572–Ile-1583 are Cytoplasmic-facing. The chain crosses the membrane as a helical span at residues Gly-1584–Phe-1601. Residues Leu-1602–Thr-1614 are Extracellular-facing. A helical membrane pass occupies residues Leu-1615–Ile-1631. Residues Lys-1632 to Ala-1650 lie on the Cytoplasmic side of the membrane. Residues Leu-1651 to Phe-1668 traverse the membrane as a helical segment. Over Gly-1669 to Thr-1690 the chain is Extracellular. Residues Phe-1691 to Pro-1713 constitute an intramembrane region (pore-forming). The Extracellular portion of the chain corresponds to Ile-1714 to Gly-1742. Cys-1721 and Cys-1736 are disulfide-bonded. A helical transmembrane segment spans residues Ile-1743–Ile-1765. The Cytoplasmic portion of the chain corresponds to Leu-1766 to Cys-1980. Residues Glu-1895–Lys-1924 form the IQ domain. Residues Ser-1922–Cys-1980 form a disordered region. Residues Thr-1938–Ser-1949 are compositionally biased toward polar residues. Over residues Thr-1951 to Cys-1980 the composition is skewed to basic and acidic residues.

This sequence belongs to the sodium channel (TC 1.A.1.10) family. Nav1.6/SCN8A subfamily. In terms of assembly, the voltage-sensitive sodium channel consists of an ion-conducting pore-forming alpha subunit regulated by one or more beta-1 (SCN1B), beta-2 (SCN2B), beta-3 (SCN3B) and/or beta-4 (SCN4B) subunits. Beta-1 (SCN1B) and beta-3 (SCN3B) are non-covalently associated with alpha, while beta-2 (SCN2B) and beta-4 (SCN4B) are covalently linked by disulfide bonds. Interacts with NEDD4 and NEDD4L. Interacts with FGF13. Interacts with FGF14, GBG3, GBB2 and SCN1B. Interacts with TMEM233. Interacts with the conotoxin GVIIJ. Interacts with the spider beta/delta-theraphotoxin-Pre1a. Interacts with CALM1; the interaction modulates the inactivation rate of SCN8A. May be ubiquitinated by NEDD4L; which would promote its endocytosis. Post-translationally, phosphorylation at Ser-1497 by PKC in a highly conserved cytoplasmic loop slows inactivation of the sodium channel and reduces peak sodium currents. Expressed in the hippocampus with increased expression in epileptic tissue compared to normal adjacent tissue (at protein level). In terms of tissue distribution, expressed in non-neuronal tissues, such as monocytes/macrophages.

It localises to the cell membrane. It is found in the cell projection. The protein resides in the axon. The protein localises to the cytoplasmic vesicle. Its subcellular location is the podosome. The catalysed reaction is Na(+)(in) = Na(+)(out). Inhibited by tetrodotoxin and, more weakly, by its metabolite 4,9-ah-tetrodotoxin. In terms of biological role, pore-forming subunit of a voltage-gated sodium channel complex assuming opened or closed conformations in response to the voltage difference across membranes and through which sodium ions selectively pass along their electrochemical gradient. Contributes to neuronal excitability by regulating action potential threshold and propagation. Functionally, more specifically expressed in non-neuronal cells, could play a role in sodium release from intracellular compartments and participate in the control of podosomes formation and macrophages adhesion and movement. The sequence is that of Sodium channel protein type 8 subunit alpha from Homo sapiens (Human).